The following is a 243-amino-acid chain: UPF0502 protein H16_B1091 (243 aa).

Residues 1 to 23 (MQSNHDSDASQAGDRPARPALRP) are disordered.

The protein belongs to the UPF0502 family.

In Cupriavidus necator (strain ATCC 17699 / DSM 428 / KCTC 22496 / NCIMB 10442 / H16 / Stanier 337) (Ralstonia eutropha), this protein is UPF0502 protein H16_B1091.